A 349-amino-acid polypeptide reads, in one-letter code: Cobalt-precorrin-5B C(1)-methyltransferase (349 aa).

The protein belongs to the CbiD family.

It catalyses the reaction Co-precorrin-5B + S-adenosyl-L-methionine = Co-precorrin-6A + S-adenosyl-L-homocysteine. It functions in the pathway cofactor biosynthesis; adenosylcobalamin biosynthesis; cob(II)yrinate a,c-diamide from sirohydrochlorin (anaerobic route): step 6/10. Catalyzes the methylation of C-1 in cobalt-precorrin-5B to form cobalt-precorrin-6A. In Saccharolobus islandicus (strain L.S.2.15 / Lassen #1) (Sulfolobus islandicus), this protein is Cobalt-precorrin-5B C(1)-methyltransferase.